Here is an 865-residue protein sequence, read N- to C-terminus: Xylosyltransferase 2 (865 aa).

The Cytoplasmic segment spans residues 1–15 (MVASARVQKLVRRYK). A helical; Signal-anchor for type II membrane protein transmembrane segment spans residues 16-36 (LAIATALAILLLQGLVVWSFS). Residues 37-865 (GLEEDEPGEK…GPVKADGRLR (829 aa)) lie on the Lumenal side of the membrane. Residues 39-157 (EEDEPGEKGR…EGAPQPTDNG (119 aa)) form a disordered region. Residues 53–65 (RPLDPGEGSKDTD) show a composition bias toward basic and acidic residues. A compositionally biased stretch (basic residues) spans 73 to 82 (SAGRRHGRWR). N-linked (GlcNAc...) asparagine glycosylation is present at Asn-122. The segment covering 125–137 (GAAAGEALVGAAG) has biased composition (low complexity). Disulfide bonds link Cys-162-Cys-190, Cys-206-Cys-448, Cys-467-Cys-480, and Cys-469-Cys-478. UDP-alpha-D-xylose contacts are provided by residues Val-239, Asp-267, and 296-298 (TIW). N-linked (GlcNAc...) asparagine glycosylation is present at Asn-327. A UDP-alpha-D-xylose-binding site is contributed by 400–401 (DW). Residues Ser-481 and 504–505 (RK) contribute to the UDP-alpha-D-xylose site. 2 cysteine pairs are disulfide-bonded: Cys-581-Cys-833 and Cys-826-Cys-839. N-linked (GlcNAc...) asparagine glycosylation occurs at Asn-683.

The protein belongs to the glycosyltransferase 14 family. XylT subfamily. Monomer. Requires Mg(2+) as cofactor. Mn(2+) serves as cofactor. Post-translationally, contains disulfide bonds.

Its subcellular location is the golgi apparatus membrane. It localises to the secreted. It catalyses the reaction UDP-alpha-D-xylose + L-seryl-[protein] = 3-O-(beta-D-xylosyl)-L-seryl-[protein] + UDP + H(+). The protein operates within glycan metabolism; chondroitin sulfate biosynthesis. It participates in glycan metabolism; heparan sulfate biosynthesis. In terms of biological role, catalyzes the first step in the biosynthesis of chondroitin sulfate, heparan sulfate and dermatan sulfate proteoglycans, such as DCN. Transfers D-xylose from UDP-D-xylose to specific serine residues of the core protein. The chain is Xylosyltransferase 2 (XYLT2) from Canis lupus familiaris (Dog).